Reading from the N-terminus, the 224-residue chain is uncharacterized protein (224 aa).

4 consecutive transmembrane segments (helical) span residues 39-59 (LICL…FYSI), 70-90 (YLSL…ILFA), 103-123 (VFVF…IGAI), and 139-159 (MHIG…FLIT).

Its subcellular location is the membrane. This is an uncharacterized protein from Dictyostelium discoideum (Social amoeba).